The following is a 179-amino-acid chain: Shikimate kinase (179 aa).

ATP is bound at residue 15–20 (GAGKTS). Position 19 (Thr19) interacts with Mg(2+). Asp37, Arg61, and Gly83 together coordinate substrate. Residue Arg122 coordinates ATP. Arg142 is a binding site for substrate.

It belongs to the shikimate kinase family. As to quaternary structure, monomer. Mg(2+) is required as a cofactor.

The protein resides in the cytoplasm. It carries out the reaction shikimate + ATP = 3-phosphoshikimate + ADP + H(+). The protein operates within metabolic intermediate biosynthesis; chorismate biosynthesis; chorismate from D-erythrose 4-phosphate and phosphoenolpyruvate: step 5/7. Catalyzes the specific phosphorylation of the 3-hydroxyl group of shikimic acid using ATP as a cosubstrate. This chain is Shikimate kinase, found in Coxiella burnetii (strain Dugway 5J108-111).